A 218-amino-acid polypeptide reads, in one-letter code: Ribose-5-phosphate isomerase A (218 aa).

Residues 28-31 (TGST), 81-84 (DGAD), and 94-97 (KGGG) contribute to the substrate site. Catalysis depends on Glu103, which acts as the Proton acceptor. Residue Lys121 coordinates substrate.

The protein belongs to the ribose 5-phosphate isomerase family. In terms of assembly, homodimer.

The enzyme catalyses aldehydo-D-ribose 5-phosphate = D-ribulose 5-phosphate. It functions in the pathway carbohydrate degradation; pentose phosphate pathway; D-ribose 5-phosphate from D-ribulose 5-phosphate (non-oxidative stage): step 1/1. In terms of biological role, catalyzes the reversible conversion of ribose-5-phosphate to ribulose 5-phosphate. This chain is Ribose-5-phosphate isomerase A, found in Vibrio atlanticus (strain LGP32) (Vibrio splendidus (strain Mel32)).